The sequence spans 196 residues: uncharacterized protein (196 aa).

This is an uncharacterized protein from Sinorhizobium fredii (strain NBRC 101917 / NGR234).